Reading from the N-terminus, the 400-residue chain is Serpin E3 (400 aa).

An N-terminal signal peptide occupies residues 1–19 (MQSLLLALLLLPVCSPGGA). A glycan (N-linked (GlcNAc...) asparagine) is linked at asparagine 46.

Belongs to the serpin family.

It is found in the secreted. In terms of biological role, probable serine protease inhibitor. The sequence is that of Serpin E3 (SERPINE3) from Bos taurus (Bovine).